Consider the following 214-residue polypeptide: Adenylate kinase (214 aa).

An ATP-binding site is contributed by 10–15 (GAGKGT). The tract at residues 30–59 (STGDMLRAAVKAGSELGKQAKAIMDAGKLV) is NMP. Residues Thr31, Arg36, 57 to 59 (KLV), 85 to 88 (GFPR), and Gln92 each bind AMP. The segment at 122-159 (GRRVHPGSGRVYHVKFNPPQVEGKDDVTGEDLMTRKDD) is LID. ATP contacts are provided by residues Arg123 and 132–133 (VY). Residues Arg156 and Arg167 each contribute to the AMP site. Gln200 provides a ligand contact to ATP.

It belongs to the adenylate kinase family. In terms of assembly, monomer.

It is found in the cytoplasm. It catalyses the reaction AMP + ATP = 2 ADP. It participates in purine metabolism; AMP biosynthesis via salvage pathway; AMP from ADP: step 1/1. Functionally, catalyzes the reversible transfer of the terminal phosphate group between ATP and AMP. Plays an important role in cellular energy homeostasis and in adenine nucleotide metabolism. This Edwardsiella ictaluri (strain 93-146) protein is Adenylate kinase.